Reading from the N-terminus, the 657-residue chain is Serine/threonine kinase NLK (657 aa).

One can recognise a Protein kinase domain in the interval 208-554 (SQPDRPIGYG…VEEALSHPYL (347 aa)). ATP-binding positions include 214-222 (IGYGAFGVV) and lysine 237. Aspartate 391 acts as the Proton acceptor in catalysis.

This sequence belongs to the protein kinase superfamily. Ser/Thr protein kinase family. Component of the beta-catenin-lit-1 complex (also called the lit-1/wrm-1 complex or the wrm-1/lit-1 kinase complex) at least composed of lit-1 and wrm-1. Interacts with wrm-1 (via N-terminus); the interaction is direct and activates lit-1 kinase activity which leads to the phosphorylation of pop-1. This promotes pop-1 interaction with par-5 and translocation of pop-1 from the nucleus to the cytoplasm. Interacts with pop-1 (when phosphorylated on 'Ser-125'); the interaction is dependent on the beta-catenin-lit-1 complex. The cofactor is Mg(2+).

It localises to the cytoplasm. Its subcellular location is the cell cortex. It is found in the nucleus. It carries out the reaction L-seryl-[protein] + ATP = O-phospho-L-seryl-[protein] + ADP + H(+). The catalysed reaction is L-threonyl-[protein] + ATP = O-phospho-L-threonyl-[protein] + ADP + H(+). In terms of biological role, has a role in the Wnt signaling pathway controlling the asymmetry of cell divisions during embryogenesis. Operates in the AB and EMS cell lineages influencing cell specification. Required for body wall muscle development, endoderm development, pop-1 asymmetry and T-cell division asymmetry. Component of the beta-catenin-lit-1 complex which promotes the phosphorylation, down-regulation and subcellular relocation of pop-1. Regulates plp-1 nuclear localization in embryos. Plays a role in male tail tip morphogenesis. The chain is Serine/threonine kinase NLK from Caenorhabditis briggsae.